The chain runs to 75 residues: DNA-directed RNA polymerase subunit omega (75 aa).

Belongs to the RNA polymerase subunit omega family. The RNAP catalytic core consists of 2 alpha, 1 beta, 1 beta' and 1 omega subunit. When a sigma factor is associated with the core the holoenzyme is formed, which can initiate transcription.

The catalysed reaction is RNA(n) + a ribonucleoside 5'-triphosphate = RNA(n+1) + diphosphate. Functionally, promotes RNA polymerase assembly. Latches the N- and C-terminal regions of the beta' subunit thereby facilitating its interaction with the beta and alpha subunits. The polypeptide is DNA-directed RNA polymerase subunit omega (Thermosipho melanesiensis (strain DSM 12029 / CIP 104789 / BI429)).